The sequence spans 300 residues: Endonuclease III-like protein 1 (300 aa).

The N-terminal 19 residues, 1 to 19 (MNSGVRMVTRSRSRATRIA), are a transit peptide targeting the mitochondrion. Positions 1 to 53 (MNSGVRMVTRSRSRATRIASEGCREELAPREAAAEGRKSHRPVRHPRRTQKTH) are disordered. The segment covering 22 to 37 (GCREELAPREAAAEGR) has biased composition (basic and acidic residues). The span at 38-51 (KSHRPVRHPRRTQK) shows a compositional bias: basic residues. In terms of domain architecture, HhH spans 187–211 (RYEGDIPASVAELVALPGVGPKMAH). Lysine 208 (nucleophile; for N-glycosylase activity) is an active-site residue. [4Fe-4S] cluster is bound by residues cysteine 278, cysteine 285, cysteine 288, and cysteine 294.

It belongs to the Nth/MutY family. Interacts with YBX1. Interacts with ERCC5/XPG; the interaction stimulates NTHL1 activity and NTHL1 binding to its DNA substrate. [4Fe-4S] cluster is required as a cofactor. Ubiquitinated by TRIM26; leading to proteasomal degradation. Widely expressed.

The protein localises to the nucleus. Its subcellular location is the mitochondrion. It catalyses the reaction 2'-deoxyribonucleotide-(2'-deoxyribose 5'-phosphate)-2'-deoxyribonucleotide-DNA = a 3'-end 2'-deoxyribonucleotide-(2,3-dehydro-2,3-deoxyribose 5'-phosphate)-DNA + a 5'-end 5'-phospho-2'-deoxyribonucleoside-DNA + H(+). Functionally, bifunctional DNA N-glycosylase with associated apurinic/apyrimidinic (AP) lyase function that catalyzes the first step in base excision repair (BER), the primary repair pathway for the repair of oxidative DNA damage. The DNA N-glycosylase activity releases the damaged DNA base from DNA by cleaving the N-glycosidic bond, leaving an AP site. The AP lyase activity cleaves the phosphodiester bond 3' to the AP site by a beta-elimination. Primarily recognizes and repairs oxidative base damage of pyrimidines. This Mus musculus (Mouse) protein is Endonuclease III-like protein 1 (Nthl1).